Here is a 476-residue protein sequence, read N- to C-terminus: Glycogen synthase (476 aa).

K15 serves as a coordination point for ADP-alpha-D-glucose.

The protein belongs to the glycosyltransferase 1 family. Bacterial/plant glycogen synthase subfamily.

The catalysed reaction is [(1-&gt;4)-alpha-D-glucosyl](n) + ADP-alpha-D-glucose = [(1-&gt;4)-alpha-D-glucosyl](n+1) + ADP + H(+). The protein operates within glycan biosynthesis; glycogen biosynthesis. Functionally, synthesizes alpha-1,4-glucan chains using ADP-glucose. The polypeptide is Glycogen synthase (Streptococcus equi subsp. equi (strain 4047)).